A 241-amino-acid chain; its full sequence is Thymidylate kinase (241 aa).

17 to 24 (GGEGAGKT) provides a ligand contact to ATP.

It belongs to the thymidylate kinase family.

The enzyme catalyses dTMP + ATP = dTDP + ADP. Its function is as follows. Phosphorylation of dTMP to form dTDP in both de novo and salvage pathways of dTTP synthesis. The protein is Thymidylate kinase of Thermosynechococcus vestitus (strain NIES-2133 / IAM M-273 / BP-1).